A 347-amino-acid chain; its full sequence is Dihydroorotate dehydrogenase (quinone) (347 aa).

FMN-binding positions include 62–66 (AGLDK) and T86. K66 is a binding site for substrate. 111 to 115 (NRMGF) lines the substrate pocket. Residues N142 and N175 each coordinate FMN. N175 is a binding site for substrate. The Nucleophile role is filled by S178. N180 contacts substrate. FMN contacts are provided by K220 and T248. Substrate is bound at residue 249 to 250 (NT). Residues G271, G300, and 321-322 (YS) contribute to the FMN site.

Belongs to the dihydroorotate dehydrogenase family. Type 2 subfamily. Monomer. It depends on FMN as a cofactor.

Its subcellular location is the cell membrane. It carries out the reaction (S)-dihydroorotate + a quinone = orotate + a quinol. It functions in the pathway pyrimidine metabolism; UMP biosynthesis via de novo pathway; orotate from (S)-dihydroorotate (quinone route): step 1/1. Functionally, catalyzes the conversion of dihydroorotate to orotate with quinone as electron acceptor. This is Dihydroorotate dehydrogenase (quinone) from Dechloromonas aromatica (strain RCB).